The sequence spans 199 residues: Peptidyl-tRNA hydrolase (199 aa).

Tyr18 serves as a coordination point for tRNA. Catalysis depends on His23, which acts as the Proton acceptor. Residues Tyr72, Asn74, and Asn120 each contribute to the tRNA site.

The protein belongs to the PTH family. Monomer.

Its subcellular location is the cytoplasm. The enzyme catalyses an N-acyl-L-alpha-aminoacyl-tRNA + H2O = an N-acyl-L-amino acid + a tRNA + H(+). Hydrolyzes ribosome-free peptidyl-tRNAs (with 1 or more amino acids incorporated), which drop off the ribosome during protein synthesis, or as a result of ribosome stalling. In terms of biological role, catalyzes the release of premature peptidyl moieties from peptidyl-tRNA molecules trapped in stalled 50S ribosomal subunits, and thus maintains levels of free tRNAs and 50S ribosomes. This Bifidobacterium adolescentis (strain ATCC 15703 / DSM 20083 / NCTC 11814 / E194a) protein is Peptidyl-tRNA hydrolase.